The following is a 122-amino-acid chain: Small ribosomal subunit protein uS13 (122 aa).

Residues 95–122 (GLPVRGQRTHTNARTRKGPAKPIAGKKK) form a disordered region.

It belongs to the universal ribosomal protein uS13 family. Part of the 30S ribosomal subunit. Forms a loose heterodimer with protein S19. Forms two bridges to the 50S subunit in the 70S ribosome.

In terms of biological role, located at the top of the head of the 30S subunit, it contacts several helices of the 16S rRNA. In the 70S ribosome it contacts the 23S rRNA (bridge B1a) and protein L5 of the 50S subunit (bridge B1b), connecting the 2 subunits; these bridges are implicated in subunit movement. Contacts the tRNAs in the A and P-sites. The protein is Small ribosomal subunit protein uS13 of Xanthobacter autotrophicus (strain ATCC BAA-1158 / Py2).